We begin with the raw amino-acid sequence, 150 residues long: Histone H2B.2 (150 aa).

2 stretches are compositionally biased toward basic and acidic residues: residues 1-21 (MAPK…KAGE) and 33-49 (EKRL…EGKK). A disordered region spans residues 1–58 (MAPKAEKKPAEKKPAEEKAGEKAPAAGKKPKAEKRLPASKGEKGGEGKKERGRKKAKK). An N6-acetyllysine mark is found at Lys7 and Lys34. Residue Lys146 forms a Glycyl lysine isopeptide (Lys-Gly) (interchain with G-Cter in ubiquitin) linkage.

It belongs to the histone H2B family. As to quaternary structure, the nucleosome is a histone octamer containing two molecules each of H2A, H2B, H3 and H4 assembled in one H3-H4 heterotetramer and two H2A-H2B heterodimers. The octamer wraps approximately 147 bp of DNA. In terms of processing, can be acetylated to form H2BK6ac and H2BK33ac. Monoubiquitinated by BRE1 to form H2BK143ub1 and deubiquitinated by UBP26. Required for heterochromatic histone H3 di- and trimethylation at H3K4me. May give a specific tag for epigenetic transcriptional activation.

It is found in the nucleus. Its subcellular location is the chromosome. In terms of biological role, core component of nucleosome. Nucleosomes wrap and compact DNA into chromatin, limiting DNA accessibility to the cellular machineries which require DNA as a template. Histones thereby play a central role in transcription regulation, DNA repair, DNA replication and chromosomal stability. DNA accessibility is regulated via a complex set of post-translational modifications of histones, also called histone code, and nucleosome remodeling. The sequence is that of Histone H2B.2 (H2B.2) from Oryza sativa subsp. indica (Rice).